A 418-amino-acid chain; its full sequence is Voltage-gated ClC-type chloride channel ClcB (418 aa).

A topological domain (cytoplasmic) is located at residue M1. Residues 2 to 22 (FHRLLIATVVGILAAFAVAGF) traverse the membrane as a helical segment. The Periplasmic portion of the chain corresponds to 23–53 (RHAMLLLEWLFLNNDSGSLVNAATNLSPWRR). A helical membrane pass occupies residues 54–74 (LLTPALGGLAAGLLLMGWQKF). Topologically, residues 75 to 145 (TQQRPHAPTD…QRFTPRQEWK (71 aa)) are cytoplasmic. Residues 146 to 166 (LWIACGAAAGMAAAYRAPLAG) traverse the membrane as a helical segment. Topologically, residues 167-177 (SLFIAEVLFGT) are periplasmic. A helical membrane pass occupies residues 178–200 (MMLASLGPVIISAVVALLVSNLI). Over 201-221 (NHSDALLYNVQLSVTVQARDY) the chain is Cytoplasmic. A helical membrane pass occupies residues 222–242 (ALIISTGVLAGLCGPLLLTLM). The Periplasmic segment spans residues 243–257 (NACHRGFVSLKLAPP). The helical transmembrane segment at 258–278 (WQLALGGLIVGLLSLFTPAVW) threads the bilayer. At 279–290 (GNGYSTVQSFLT) the chain is on the cytoplasmic side. Residues 291 to 311 (APPLLMIIAGIFLCKLCAVLA) form a helical membrane-spanning segment. The Periplasmic segment spans residues 312–315 (SSGS). The helical transmembrane segment at 316-336 (GAPGGVFTPTLFIGLAIGMLY) threads the bilayer. The Cytoplasmic portion of the chain corresponds to 337 to 351 (GRSLGLWFPDGEEIT). A helical transmembrane segment spans residues 352-372 (LLLGLTGMATLLAATTHAPIM). At 373–379 (STLMICE) the chain is on the periplasmic side. A helical membrane pass occupies residues 380-400 (MTGEYQLLPGLLIACVIASVI). The Cytoplasmic segment spans residues 401–418 (SRTLHRDSIYRQHTAQHS).

It belongs to the chloride channel (TC 2.A.49) family. ClcB subfamily.

The protein resides in the cell inner membrane. Its function is as follows. Probably acts as an electrical shunt for an outwardly-directed proton pump that is linked to amino acid decarboxylation, as part of the extreme acid resistance (XAR) response. In Escherichia coli (strain K12), this protein is Voltage-gated ClC-type chloride channel ClcB (clcB).